The primary structure comprises 467 residues: Argininosuccinate lyase (467 aa).

The protein belongs to the lyase 1 family. Argininosuccinate lyase subfamily.

It localises to the cytoplasm. The catalysed reaction is 2-(N(omega)-L-arginino)succinate = fumarate + L-arginine. Its pathway is amino-acid biosynthesis; L-arginine biosynthesis; L-arginine from L-ornithine and carbamoyl phosphate: step 3/3. The sequence is that of Argininosuccinate lyase from Rhizobium etli (strain ATCC 51251 / DSM 11541 / JCM 21823 / NBRC 15573 / CFN 42).